Here is a 74-residue protein sequence, read N- to C-terminus: Kappa-scoloptoxin(03)-Ssm1a (74 aa).

An N-terminal signal peptide occupies residues Met1–Ser23. 3 cysteine pairs are disulfide-bonded: Cys32–Cys59, Cys42–Cys58, and Cys45–Cys68.

This sequence belongs to the scoloptoxin-03 family. As to expression, expressed by the venom gland.

The protein resides in the secreted. This toxin inhibits voltage-gated potassium channel currents in DRG neurons (IC(50)=44.2 nM). In vivo, insects injected with this toxin showed signs of neurotoxicity including twitching, paralysis, and body contraction. The polypeptide is Kappa-scoloptoxin(03)-Ssm1a (Scolopendra mutilans (Chinese red-headed centipede)).